The following is a 181-amino-acid chain: Adenine phosphoribosyltransferase (181 aa).

The protein belongs to the purine/pyrimidine phosphoribosyltransferase family. As to quaternary structure, homodimer.

It localises to the cytoplasm. It catalyses the reaction AMP + diphosphate = 5-phospho-alpha-D-ribose 1-diphosphate + adenine. It functions in the pathway purine metabolism; AMP biosynthesis via salvage pathway; AMP from adenine: step 1/1. Functionally, catalyzes a salvage reaction resulting in the formation of AMP, that is energically less costly than de novo synthesis. This Colwellia psychrerythraea (strain 34H / ATCC BAA-681) (Vibrio psychroerythus) protein is Adenine phosphoribosyltransferase.